Consider the following 345-residue polypeptide: Membrane progestin receptor gamma-A (345 aa).

At 1–52 the chain is on the cytoplasmic side; sequence MLNLIKLPQVFTINQVPKVFHEDGIISGYRHPCSSAKDCVLSLFQLTNETLN. A helical transmembrane segment spans residues 53–73; that stretch reads IWTHFLPTWFFLWKLLTVVLV. The Extracellular portion of the chain corresponds to 74-80; that stretch reads LEDWRDP. Residues 81 to 101 traverse the membrane as a helical segment; the sequence is FIWPFLVFLLSCCVYPLASSC. Residues 102 to 114 lie on the Cytoplasmic side of the membrane; sequence AHTFSTMSERARH. Residues 115-135 traverse the membrane as a helical segment; that stretch reads ICFFFDYGALSFYSLGSAIIY. Over 136-148 the chain is Extracellular; that stretch reads SSYSFPDKWVNGT. Residues 149 to 169 form a helical membrane-spanning segment; sequence FHLNYVSIAVVNSIISTALAC. The Cytoplasmic segment spans residues 170-201; the sequence is YSRLGLPFLEYNCHSIKRPSGKLDQKLCKCLR. Residues 202-222 form a helical membrane-spanning segment; it reads IIAFVYPYLFDNIPLFYRIFV. The Extracellular segment spans residues 223-272; it reads CAGEGCTVNEANTVHYQHTSLAFFTGFLFATHLPERLAPGSFDYIGHSHQ. Residues 273–293 traverse the membrane as a helical segment; sequence LFHVFAIIGTYFQMTAIELDM. The Cytoplasmic portion of the chain corresponds to 294–314; it reads AARKQWLHAHLPPVTFLNTVG. A helical membrane pass occupies residues 315–335; the sequence is AAFFSVVSGLCIVYVFSLSLF. At 336–345 the chain is on the extracellular side; that stretch reads STRGVKNKSF.

The protein belongs to the ADIPOR family.

It is found in the membrane. Its function is as follows. Steroid membrane receptor. Binds progesterone. May be involved in oocyte maturation. This chain is Membrane progestin receptor gamma-A (paqr5a), found in Danio rerio (Zebrafish).